Reading from the N-terminus, the 524-residue chain is Cytochrome P450 1A1 (524 aa).

The tract at residues tryptophan 33–proline 44 is mitochondrial targeting signal. A glycan (O-linked (GlcNAc) serine) is linked at serine 71. Phenylalanine 228 is a binding site for substrate. Cysteine 461 provides a ligand contact to heme.

This sequence belongs to the cytochrome P450 family. In terms of assembly, interacts with cytosolic chaperones HSP70 and HSP90; this interaction is required for initial targeting to mitochondria. Interacts (via mitochondrial targeting signal) with TOMM40 (via N-terminus); this interaction is required for translocation across the mitochondrial outer membrane. The cofactor is heme.

The protein localises to the endoplasmic reticulum membrane. The protein resides in the mitochondrion inner membrane. It is found in the microsome membrane. Its subcellular location is the cytoplasm. The enzyme catalyses an organic molecule + reduced [NADPH--hemoprotein reductase] + O2 = an alcohol + oxidized [NADPH--hemoprotein reductase] + H2O + H(+). The catalysed reaction is estrone + reduced [NADPH--hemoprotein reductase] + O2 = 2-hydroxyestrone + oxidized [NADPH--hemoprotein reductase] + H2O + H(+). It catalyses the reaction estrone + reduced [NADPH--hemoprotein reductase] + O2 = 4-hydroxyestrone + oxidized [NADPH--hemoprotein reductase] + H2O + H(+). It carries out the reaction estrone + reduced [NADPH--hemoprotein reductase] + O2 = 6alpha-hydroxyestrone + oxidized [NADPH--hemoprotein reductase] + H2O + H(+). The enzyme catalyses estrone + reduced [NADPH--hemoprotein reductase] + O2 = 15alpha-hydroxyestrone + oxidized [NADPH--hemoprotein reductase] + H2O + H(+). The catalysed reaction is estrone + reduced [NADPH--hemoprotein reductase] + O2 = 16alpha-hydroxyestrone + oxidized [NADPH--hemoprotein reductase] + H2O + H(+). It catalyses the reaction 17beta-estradiol + reduced [NADPH--hemoprotein reductase] + O2 = 2-hydroxy-17beta-estradiol + oxidized [NADPH--hemoprotein reductase] + H2O + H(+). It carries out the reaction 17beta-estradiol + reduced [NADPH--hemoprotein reductase] + O2 = 4-hydroxy-17beta-estradiol + oxidized [NADPH--hemoprotein reductase] + H2O + H(+). The enzyme catalyses 17beta-estradiol + reduced [NADPH--hemoprotein reductase] + O2 = 6alpha-hydroxy-17beta-estradiol + oxidized [NADPH--hemoprotein reductase] + H2O + H(+). The catalysed reaction is 17beta-estradiol + reduced [NADPH--hemoprotein reductase] + O2 = 7alpha-hydroxy-17beta-estradiol + oxidized [NADPH--hemoprotein reductase] + H2O + H(+). It catalyses the reaction 17beta-estradiol + reduced [NADPH--hemoprotein reductase] + O2 = 15alpha-hydroxy-17beta-estradiol + oxidized [NADPH--hemoprotein reductase] + H2O + H(+). It carries out the reaction (5Z,8Z,11Z)-eicosatrienoate + reduced [NADPH--hemoprotein reductase] + O2 = 19-hydroxy-(5Z,8Z,11Z)-eicosatrienoate + oxidized [NADPH--hemoprotein reductase] + H2O + H(+). The enzyme catalyses (5Z,8Z,11Z,14Z)-eicosatetraenoate + reduced [NADPH--hemoprotein reductase] + O2 = 16-hydroxy-(5Z,8Z,11Z,14Z)-eicosatetraenoate + oxidized [NADPH--hemoprotein reductase] + H2O + H(+). The catalysed reaction is (5Z,8Z,11Z,14Z)-eicosatetraenoate + reduced [NADPH--hemoprotein reductase] + O2 = 17-hydroxy-(5Z,8Z,11Z,14Z)-eicosatetraenoate + oxidized [NADPH--hemoprotein reductase] + H2O + H(+). It catalyses the reaction (5Z,8Z,11Z,14Z)-eicosatetraenoate + reduced [NADPH--hemoprotein reductase] + O2 = 18-hydroxy-(5Z,8Z,11Z,14Z)-eicosatetraenoate + oxidized [NADPH--hemoprotein reductase] + H2O + H(+). It carries out the reaction (5Z,8Z,11Z,14Z)-eicosatetraenoate + reduced [NADPH--hemoprotein reductase] + O2 = 19-hydroxy-(5Z,8Z,11Z,14Z)-eicosatetraenoate + oxidized [NADPH--hemoprotein reductase] + H2O + H(+). The enzyme catalyses (5Z,8Z,11Z,14Z,17Z)-eicosapentaenoate + reduced [NADPH--hemoprotein reductase] + O2 = 19-hydroxy-(5Z,8Z,11Z,14Z,17Z)-eicosapentaenoate + oxidized [NADPH--hemoprotein reductase] + H2O + H(+). The catalysed reaction is (5Z,8Z,11Z,14Z)-eicosatetraenoate + reduced [NADPH--hemoprotein reductase] + O2 = (8R,9S)-epoxy-(5Z,11Z,14Z)-eicosatrienoate + oxidized [NADPH--hemoprotein reductase] + H2O + H(+). It catalyses the reaction (5Z,8Z,11Z,14Z)-eicosatetraenoate + reduced [NADPH--hemoprotein reductase] + O2 = (11R,12S)-epoxy-(5Z,8Z,14Z)-eicosatrienoate + oxidized [NADPH--hemoprotein reductase] + H2O + H(+). It carries out the reaction (5Z,8Z,11Z,14Z)-eicosatetraenoate + reduced [NADPH--hemoprotein reductase] + O2 = (14S,15R)-epoxy-(5Z,8Z,11Z)-eicosatrienoate + oxidized [NADPH--hemoprotein reductase] + H2O + H(+). The enzyme catalyses (5Z,8Z,11Z,14Z)-eicosatetraenoate + reduced [NADPH--hemoprotein reductase] + O2 = (14R,15S)-epoxy-(5Z,8Z,11Z)-eicosatrienoate + oxidized [NADPH--hemoprotein reductase] + H2O + H(+). The catalysed reaction is (5Z,8Z,11Z,14Z,17Z)-eicosapentaenoate + reduced [NADPH--hemoprotein reductase] + O2 = (17R,18S)-epoxy-(5Z,8Z,11Z,14Z)-eicosatetraenoate + oxidized [NADPH--hemoprotein reductase] + H2O + H(+). It catalyses the reaction (4Z,7Z,10Z,13Z,16Z,19Z)-docosahexaenoate + reduced [NADPH--hemoprotein reductase] + O2 = (19S,20R)-epoxy-(4Z,7Z,10Z,13Z,16Z)-docosapentaenoate + oxidized [NADPH--hemoprotein reductase] + H2O + H(+). It carries out the reaction (4Z,7Z,10Z,13Z,16Z,19Z)-docosahexaenoate + reduced [NADPH--hemoprotein reductase] + O2 = (19R,20S)-epoxy-(4Z,7Z,10Z,13Z,16Z)-docosapentaenoate + oxidized [NADPH--hemoprotein reductase] + H2O + H(+). The enzyme catalyses all-trans-retinol + reduced [NADPH--hemoprotein reductase] + O2 = all-trans-retinal + oxidized [NADPH--hemoprotein reductase] + 2 H2O + H(+). The catalysed reaction is all-trans-retinal + reduced [NADPH--hemoprotein reductase] + O2 = all-trans-retinoate + oxidized [NADPH--hemoprotein reductase] + H2O + 2 H(+). It catalyses the reaction (13S)-hydroperoxy-(9Z,11E)-octadecadienoate = 13-oxo-(9Z,11E)-octadecadienoate + H2O. It carries out the reaction (12S)-hydroperoxy-(5Z,8Z,10E,14Z)-eicosatetraenoate = 12-oxo-(5Z,8Z,10E,14Z)-eicosatetraenoate + H2O. The enzyme catalyses (15S)-hydroperoxy-(5Z,8Z,11Z,13E)-eicosatetraenoate = 15-oxo-(5Z,8Z,11Z,13E)-eicosatetraenoate + H2O. The catalysed reaction is (5S)-hydroperoxy-(6E,8Z,11Z,14Z)-eicosatetraenoate = 5-oxo-(6E,8Z,11Z,14Z)-eicosatetraenoate + H2O. The protein operates within steroid hormone biosynthesis. Its pathway is lipid metabolism; fatty acid metabolism. It functions in the pathway cofactor metabolism; retinol metabolism. Its function is as follows. A cytochrome P450 monooxygenase involved in the metabolism of various endogenous substrates, including fatty acids, steroid hormones and vitamins. Mechanistically, uses molecular oxygen inserting one oxygen atom into a substrate, and reducing the second into a water molecule, with two electrons provided by NADPH via cytochrome P450 reductase (CPR; NADPH-ferrihemoprotein reductase). Catalyzes the hydroxylation of carbon-hydrogen bonds. Exhibits high catalytic activity for the formation of hydroxyestrogens from estrone (E1) and 17beta-estradiol (E2), namely 2-hydroxy E1 and E2, as well as D-ring hydroxylated E1 and E2 at the C15alpha and C16alpha positions. Displays different regioselectivities for polyunsaturated fatty acids (PUFA) hydroxylation. Catalyzes the epoxidation of double bonds of certain PUFA. Converts arachidonic acid toward epoxyeicosatrienoic acid (EET) regioisomers, 8,9-, 11,12-, and 14,15-EET, that function as lipid mediators in the vascular system. Displays an absolute stereoselectivity in the epoxidation of eicosapentaenoic acid (EPA) producing the 17(R),18(S) enantiomer. May play an important role in all-trans retinoic acid biosynthesis in extrahepatic tissues. Catalyzes two successive oxidative transformation of all-trans retinol to all-trans retinal and then to the active form all-trans retinoic acid. May also participate in eicosanoids metabolism by converting hydroperoxide species into oxo metabolites (lipoxygenase-like reaction, NADPH-independent). The chain is Cytochrome P450 1A1 (CYP1A1) from Canis lupus familiaris (Dog).